We begin with the raw amino-acid sequence, 910 residues long: MPLRLDIKRKLAQRSERAKSVDLHPTEPWILSSLYSGSVCIWNYQTQTMVKSFEVTELPVRSSKFITRKQWVVAGADDMFIRVYNYNTMDKVKVFEAHTDYIRCVAVHPTQPFVLSSSDDMLIKLWDWDKGWMCTQIFEGHSHYVMQVTFNPKDTNTFASASLDRTVKVWSLGSPDPNFTLDGHSKGVNCVDYFTGGDRPYLITGSDDQTAKVWDYQTKSCVQTLEGHAHNVSAVCFHPELPIILTGSEDGTVRLWHSTTYRLENTLNYGLERVWALGYMKGSRRVVIGYDEGTIMIKIGREVPVASMDSSGKIIWSKHNEIQTVNIKTIGADNEIADGERLPLVVKELGTCDLYPQSLRHNPNGRFVVVCGDGEYIIYTALAWRNRSFGSALEFVWSLDGEYAVRESTSRIKIYSKNFQERKSIRPPFSAERIFGGVLLAMCTNDFICFHDWAEGRMIRRIDVNVKNLYWADSGDLVTIASDTSFYILKYNRDVVSSHLDGGGSVGEEGVEDAFELLHEINERIRTGLWVGDCFIYNNSSSRLNYCVGGEVTTLFHLDRQMYLLGYLANQSRVYLIDKQFNVVGYTLLLTMIEYKTLVMRGDFDRANALLPSIPKEQHDSVARFLESRGMLEEALEIATDSNYRFDLAVQLGRLEVAKAIAIEAQSESKWRQLGELAMSTGKLDMAEECLLHAMDLSGLLLLYSSLGDAEGLTKLTSMAKEQGKNNVAFLCFFMLGKLEECLQLLIESNRIPEAALMSRSYLPSKVPEIVTLWKKDLQKVNPKAAESLADPNEYPNLFEDWQIALNVEANVAPKRGIYAPAKEYIIHAERPNETLVEAFKNMRIHQEEVLPDENGDDTHEAIEENGVEESQEDAVEVDVEADGSTDGTVLVNGNDTEEQWGTNNEESLA.

WD repeat units follow at residues 13-52 (QRSE…MVKS), 55-94 (VTEL…KVKV), 97-136 (AHTD…MCTQ), 140-180 (GHSH…PNFT), 183-224 (GHSK…CVQT), 227-266 (GHAH…LENT), 269-309 (YGLE…ASMD), 351-393 (TCDL…GSAL), and 461-501 (RIDV…SHLD). The span at 865–884 (ENGVEESQEDAVEVDVEADG) shows a compositional bias: acidic residues. Residues 865-910 (ENGVEESQEDAVEVDVEADGSTDGTVLVNGNDTEEQWGTNNEESLA) form a disordered region. Residues 886-910 (TDGTVLVNGNDTEEQWGTNNEESLA) show a composition bias toward polar residues.

The protein belongs to the WD repeat COPB2 family. As to quaternary structure, oligomeric complex that consists of at least the alpha, beta, beta', gamma, delta, epsilon and zeta subunits.

The protein resides in the cytoplasm. It is found in the golgi apparatus membrane. It localises to the cytoplasmic vesicle. Its subcellular location is the COPI-coated vesicle membrane. Its function is as follows. The coatomer is a cytosolic protein complex that binds to dilysine motifs and reversibly associates with Golgi non-clathrin-coated vesicles, which further mediate biosynthetic protein transport from the ER, via the Golgi up to the trans Golgi network. Coatomer complex is required for budding from Golgi membranes, and is essential for the retrograde Golgi-to-ER transport of dilysine-tagged proteins. This Oryza sativa subsp. japonica (Rice) protein is Putative coatomer subunit beta'-3.